A 179-amino-acid polypeptide reads, in one-letter code: Transcriptional repressor NrdR (179 aa).

A zinc finger spans residues C3 to C34. The region spanning I49 to D139 is the ATP-cone domain. Residues K160–S179 are disordered. The segment covering Q169 to S179 has biased composition (polar residues).

Belongs to the NrdR family. It depends on Zn(2+) as a cofactor.

In terms of biological role, negatively regulates transcription of bacterial ribonucleotide reductase nrd genes and operons by binding to NrdR-boxes. In Rippkaea orientalis (strain PCC 8801 / RF-1) (Cyanothece sp. (strain PCC 8801)), this protein is Transcriptional repressor NrdR.